Here is a 249-residue protein sequence, read N- to C-terminus: Probable cobalt-factor III C(17)-methyltransferase (249 aa).

This sequence belongs to the precorrin methyltransferase family.

It carries out the reaction Co(II)-factor III + S-adenosyl-L-methionine + H(+) = Co(II)-factor IV + S-adenosyl-L-homocysteine. It functions in the pathway cofactor biosynthesis; adenosylcobalamin biosynthesis; cob(II)yrinate a,c-diamide from sirohydrochlorin (anaerobic route): step 3/10. Its function is as follows. Methyltransferase that likely catalyzes the ring contraction and methylation of C-17 in cobalt-factor III to form cobalt-factor IV. May also convert cobalt-precorrin-3 to cobalt-precorrin-4. The polypeptide is Probable cobalt-factor III C(17)-methyltransferase (cbiH) (Methanocaldococcus jannaschii (strain ATCC 43067 / DSM 2661 / JAL-1 / JCM 10045 / NBRC 100440) (Methanococcus jannaschii)).